The sequence spans 358 residues: Tripartite motif-containing protein 54 (358 aa).

The RING-type zinc finger occupies 26 to 82; the sequence is CPICLEMFSKPVVILPCQHNLCRKCANDVFQASNPLWQSRGSTTVSSGGRFRCPSCR. The B box-type zinc finger occupies 121 to 163; sequence EQHLMCEEHEEEKINIYCLSCEVPTCSLCKVFGAHKDCEVAPL. The Zn(2+) site is built by C126, H129, C149, and H155. The mediates microtubule-binding and homooligomerization stretch occupies residues 168 to 211; that stretch reads KRQKSELSDGIAMLVAGNDRVQAVITQMEEVCQTIEDNSRRQKQ. Residues 220 to 258 adopt a coiled-coil conformation; the sequence is LCAVLEERKGELLQALAREQEEKLQRVRGLIRQYGDHLE. The region spanning 271-329 is the COS domain; it reads MEEPQMALYLQQAKELINKVGAMSKVELAGRPEPGYESMEQFTVRVEHVAEMLRTIDFQ. Positions 326 to 358 are disordered; that stretch reads IDFQPGASGEEEEVAPDGEEGSAGPEEERPDGP. Over residues 334–345 the composition is skewed to acidic residues; it reads GEEEEVAPDGEE.

In terms of assembly, homooligomer and heterooligomer. Interacts with tubulin. Interacts with TRIM63 and probably with TRIM55. As to expression, specifically expressed in heart and skeletal muscle.

It is found in the cytoplasm. It localises to the cytoskeleton. The protein localises to the myofibril. Its subcellular location is the sarcomere. The protein resides in the z line. Its function is as follows. May bind and stabilize microtubules during myotubes formation. The chain is Tripartite motif-containing protein 54 (TRIM54) from Homo sapiens (Human).